Here is a 166-residue protein sequence, read N- to C-terminus: Nucleotide-binding protein Dred_1927 (166 aa).

This sequence belongs to the YajQ family.

In terms of biological role, nucleotide-binding protein. The chain is Nucleotide-binding protein Dred_1927 from Desulforamulus reducens (strain ATCC BAA-1160 / DSM 100696 / MI-1) (Desulfotomaculum reducens).